The primary structure comprises 284 residues: Deoxyribonuclease-1 (284 aa).

An N-terminal signal peptide occupies residues 1-22; it reads MRYTGLMGTLLTLVNLLQLAGT. Asn40 carries N-linked (GlcNAc...) asparagine glycosylation. The active site involves Glu100. A disulfide bridge connects residues Cys123 and Cys126. Asn128 carries N-linked (GlcNAc...) asparagine glycosylation. Residue His156 is part of the active site. A disulfide bridge links Cys195 with Cys231.

This sequence belongs to the DNase I family. Requires Ca(2+) as cofactor. Mg(2+) is required as a cofactor. N-glycosylated. As to expression, highly expressed in the parotid and submandibular gland as well as in the kidney and duodenum (at protein level). Expressed at intermediate level in the ileum, mesenterial lymph nodes, liver, ventral prostate, epididymis, ovary and stomach (at protein level). Expressed at low level in the sublingual, preputial, coagulation and pituitary gland (at protein level). Also present in the lachrymal and thyroid glands, striated muscle, intestine, the urinary bladder and the eye.

The protein localises to the secreted. It localises to the zymogen granule. It is found in the nucleus envelope. It catalyses the reaction Endonucleolytic cleavage to 5'-phosphodinucleotide and 5'-phosphooligonucleotide end-products.. Functionally, serum endocuclease secreted into body fluids by a wide variety of exocrine and endocrine organs. Expressed by non-hematopoietic tissues and preferentially cleaves protein-free DNA. Among other functions, seems to be involved in cell death by apoptosis. Binds specifically to G-actin and blocks actin polymerization. Together with DNASE1L3, plays a key role in degrading neutrophil extracellular traps (NETs). NETs are mainly composed of DNA fibers and are released by neutrophils to bind pathogens during inflammation. Degradation of intravascular NETs by DNASE1 and DNASE1L3 is required to prevent formation of clots that obstruct blood vessels and cause organ damage following inflammation. In Mus musculus (Mouse), this protein is Deoxyribonuclease-1.